The sequence spans 370 residues: Dihydroorotate dehydrogenase (quinone) (370 aa).

Residues 80 to 84 and threonine 104 contribute to the FMN site; that span reads AGFDK. Lysine 84 is a binding site for substrate. Substrate is bound at residue 129 to 133; it reads NRMGF. FMN-binding residues include asparagine 157 and asparagine 190. Asparagine 190 contributes to the substrate binding site. The Nucleophile role is filled by serine 193. Asparagine 195 contributes to the substrate binding site. FMN is bound by residues lysine 226 and threonine 254. Residue 255-256 coordinates substrate; that stretch reads NT. Residues glycine 278, glycine 307, and 328 to 329 each bind FMN; that span reads YT.

The protein belongs to the dihydroorotate dehydrogenase family. Type 2 subfamily. In terms of assembly, monomer. FMN is required as a cofactor.

The protein resides in the cell membrane. It catalyses the reaction (S)-dihydroorotate + a quinone = orotate + a quinol. The protein operates within pyrimidine metabolism; UMP biosynthesis via de novo pathway; orotate from (S)-dihydroorotate (quinone route): step 1/1. Catalyzes the conversion of dihydroorotate to orotate with quinone as electron acceptor. The protein is Dihydroorotate dehydrogenase (quinone) of Mycolicibacterium paratuberculosis (strain ATCC BAA-968 / K-10) (Mycobacterium paratuberculosis).